Here is a 214-residue protein sequence, read N- to C-terminus: Ribosomal RNA small subunit methyltransferase G (214 aa).

S-adenosyl-L-methionine is bound by residues G81, M86, 132–133 (VE), and R147.

It belongs to the methyltransferase superfamily. RNA methyltransferase RsmG family.

It is found in the cytoplasm. The enzyme catalyses guanosine(527) in 16S rRNA + S-adenosyl-L-methionine = N(7)-methylguanosine(527) in 16S rRNA + S-adenosyl-L-homocysteine. Specifically methylates the N7 position of guanine in position 527 of 16S rRNA. This Pseudomonas paraeruginosa (strain DSM 24068 / PA7) (Pseudomonas aeruginosa (strain PA7)) protein is Ribosomal RNA small subunit methyltransferase G.